A 632-amino-acid chain; its full sequence is MAU2 chromatid cohesion factor homolog (632 aa).

TPR repeat units follow at residues 453 to 486 (GGFY…ANAE) and 493 to 526 (SCSL…ASKI).

The protein belongs to the SCC4/mau-2 family. Interacts with Nipped-B to form the cohesin loading complex.

It localises to the nucleus. Its subcellular location is the nucleoplasm. Functionally, required for association of the cohesin complex with chromatin during interphase. Plays a role in sister chromatid cohesion and normal progression through prometaphase. This chain is MAU2 chromatid cohesion factor homolog, found in Drosophila sechellia (Fruit fly).